The chain runs to 286 residues: 3-hydroxyanthranilate 3,4-dioxygenase (286 aa).

The segment at 1 to 160 is domain A (catalytic); it reads MERPVRVKAW…SEQYRTGKPN (160 aa). Residue Arg-43 coordinates O2. His-47, Glu-53, and His-91 together coordinate Fe cation. Glu-53 contacts substrate. Substrate-binding residues include Arg-95 and Glu-105. The segment at 161 to 177 is linker; the sequence is PDQLLKEPPFPLSTRSV. A domain B region spans residues 178 to 286; that stretch reads MEPMCLEAWL…QDPACKKSLG (109 aa).

Belongs to the 3-HAO family. Monomer. The cofactor is Fe(2+).

It localises to the cytoplasm. Its subcellular location is the cytosol. It carries out the reaction 3-hydroxyanthranilate + O2 = (2Z,4Z)-2-amino-3-carboxymuconate 6-semialdehyde. Its pathway is cofactor biosynthesis; NAD(+) biosynthesis; quinolinate from L-kynurenine: step 3/3. Catalyzes the oxidative ring opening of 3-hydroxyanthranilate to 2-amino-3-carboxymuconate semialdehyde, which spontaneously cyclizes to quinolinate. The sequence is that of 3-hydroxyanthranilate 3,4-dioxygenase from Bos taurus (Bovine).